The following is a 373-amino-acid chain: AA9 family lytic polysaccharide monooxygenase A (373 aa).

Residues 1 to 20 (MKSSTFGMLALAAAAKLVSA) form the signal peptide. Residue His21 participates in Cu(2+) binding. The disordered stretch occupies residues 36-55 (EGNSQSGYIRSPPSNSPITD). Cys63 and Cys183 are joined by a disulfide. Cu(2+) is bound at residue His102. The O2 site is built by His169 and Gln178. A Cu(2+)-binding site is contributed by Tyr180. Positions 234–333 (GASGSSSSSS…NSVPQPSSNA (100 aa)) are disordered. 2 stretches are compositionally biased toward low complexity: residues 235 to 262 (ASGS…APSS) and 270 to 323 (PATS…AAPT). A compositionally biased stretch (polar residues) spans 324-333 (NSVPQPSSNA). The CBM1 domain occupies 335 to 371 (GAVKEWYQCGGLNYSGSTQCEEGLTCKKWNPYYHQCV). An N-linked (GlcNAc...) asparagine glycan is attached at Asn347.

This sequence belongs to the polysaccharide monooxygenase AA9 family. It depends on Cu(2+) as a cofactor.

It is found in the secreted. The enzyme catalyses [(1-&gt;4)-beta-D-glucosyl]n+m + reduced acceptor + O2 = 4-dehydro-beta-D-glucosyl-[(1-&gt;4)-beta-D-glucosyl]n-1 + [(1-&gt;4)-beta-D-glucosyl]m + acceptor + H2O.. Its function is as follows. Lytic polysaccharide monooxygenase (LPMO) that depolymerizes crystalline and amorphous polysaccharides via the oxidation of scissile alpha- or beta-(1-4)-glycosidic bonds, yielding exclusively C4 oxidation products. Catalysis by LPMOs requires the reduction of the active-site copper from Cu(II) to Cu(I) by a reducing agent and H(2)O(2) or O(2) as a cosubstrate. In addition to cellulose, also cleaves the beta-(1!4)-glucan backbone of tamarind xyloglucan, but only next to unsubstituted glucosyl units. This Aspergillus tamarii protein is AA9 family lytic polysaccharide monooxygenase A.